A 365-amino-acid polypeptide reads, in one-letter code: Annexin B22 (365 aa).

Annexin repeat units lie at residues Phe34–Val105, Asp106–Gln185, Glu211–Arg283, and Asp287–Gly358. 20 residues coordinate Ca(2+): Met47, Gly49, Gly51, Thr52, Glu54, Asp91, Met119, Gly121, Gly123, Asp126, Lys169, Glu171, Thr172, Glu177, Asp273, Met300, Gly302, Leu303, Gly304, and Asp344.

Belongs to the annexin family. Homodimer.

The protein resides in the tegument. It is found in the secreted. Its subcellular location is the extracellular exosome. It localises to the host cell. In terms of biological role, involved in reproduction of the worm. Involved in host-parasite interaction. Delivered into the host cell by means of parasite exosomes. Binds to acidic phospholipid membranes in a calcium-dependent manner in vitro. Causes aggregation of liposomes in the presence of calcium, but not in its absence. Likely to promote membrane fusion. May provide structural integrity within the tegument. This Schistosoma mansoni (Blood fluke) protein is Annexin B22.